A 454-amino-acid polypeptide reads, in one-letter code: Transmembrane protease serine 3 (454 aa).

The Cytoplasmic segment spans residues 1-48 (MGENDPPAVEAPFSFRSLFGLDDLKISPVAPDADAVAAQILSLLPLKF). The helical; Signal-anchor for type II membrane protein transmembrane segment at 49 to 69 (FPIIVIGIIALILALAIGLGI) threads the bilayer. Residues 70–454 (HFDCSGKYRC…HEQMERDLKT (385 aa)) are Extracellular-facing. Residues 72–108 (DCSGKYRCRSSFKCIELIARCDGVSDCKDGEDEYRCV) enclose the LDL-receptor class A domain. 10 cysteine pairs are disulfide-bonded: Cys73–Cys85, Cys79–Cys98, Cys92–Cys107, Cys129–Cys194, Cys142–Cys204, Cys207–Cys324, Cys242–Cys258, Cys338–Cys407, Cys370–Cys386, and Cys397–Cys425. One can recognise an SRCR domain in the interval 109-205 (RVGGQNAVLQ…SGHVVTLQCT (97 aa)). One can recognise a Peptidase S1 domain in the interval 217–449 (IVGGNMSLLS…FLDWIHEQME (233 aa)). N-linked (GlcNAc...) asparagine glycosylation is present at Asn221. Catalysis depends on charge relay system residues His257 and Asp304. Ser401 functions as the Charge relay system in the catalytic mechanism.

It belongs to the peptidase S1 family. In terms of processing, undergoes autoproteolytic activation. Expressed in many tissues including fetal cochlea. Isoform T is found at increased levels in some carcinomas.

The protein resides in the endoplasmic reticulum membrane. In terms of biological role, probable serine protease that plays a role in hearing. Acts as a permissive factor for cochlear hair cell survival and activation at the onset of hearing and is required for saccular hair cell survival. Activates ENaC (in vitro). The chain is Transmembrane protease serine 3 (TMPRSS3) from Homo sapiens (Human).